The primary structure comprises 123 residues: Alpha-lactalbumin B/C (123 aa).

One can recognise a C-type lysozyme domain in the interval 1-123 (KQFTKCQLSQ…KLEQWLCEEL (123 aa)). 4 disulfide bridges follow: cysteine 6–cysteine 120, cysteine 28–cysteine 111, cysteine 61–cysteine 77, and cysteine 73–cysteine 91. Lysine 79, aspartate 82, aspartate 84, aspartate 87, and aspartate 88 together coordinate Ca(2+).

It belongs to the glycosyl hydrolase 22 family. In terms of assembly, lactose synthase (LS) is a heterodimer of a catalytic component, beta1,4-galactosyltransferase (beta4Gal-T1) and a regulatory component, alpha-lactalbumin (LA). Mammary gland specific. Secreted in milk.

The protein localises to the secreted. Functionally, regulatory subunit of lactose synthase, changes the substrate specificity of galactosyltransferase in the mammary gland making glucose a good acceptor substrate for this enzyme. This enables LS to synthesize lactose, the major carbohydrate component of milk. In other tissues, galactosyltransferase transfers galactose onto the N-acetylglucosamine of the oligosaccharide chains in glycoproteins. This is Alpha-lactalbumin B/C from Equus caballus (Horse).